A 176-amino-acid chain; its full sequence is Large ribosomal subunit protein uL6 (176 aa).

Belongs to the universal ribosomal protein uL6 family. As to quaternary structure, part of the 50S ribosomal subunit.

In terms of biological role, this protein binds to the 23S rRNA, and is important in its secondary structure. It is located near the subunit interface in the base of the L7/L12 stalk, and near the tRNA binding site of the peptidyltransferase center. This chain is Large ribosomal subunit protein uL6, found in Methanosarcina mazei (strain ATCC BAA-159 / DSM 3647 / Goe1 / Go1 / JCM 11833 / OCM 88) (Methanosarcina frisia).